Consider the following 185-residue polypeptide: Transcription factor FapR (185 aa).

This sequence belongs to the FapR family.

Its function is as follows. Transcriptional factor involved in regulation of membrane lipid biosynthesis by repressing genes involved in fatty acid and phospholipid metabolism. This chain is Transcription factor FapR, found in Staphylococcus aureus (strain Mu3 / ATCC 700698).